Consider the following 716-residue polypeptide: Beta-galactosidase (716 aa).

E389 serves as the catalytic Proton donor. The Nucleophile role is filled by E462.

This sequence belongs to the glycosyl hydrolase 2 family. Homodimer.

The enzyme catalyses Hydrolysis of terminal non-reducing beta-D-galactose residues in beta-D-galactosides.. Its function is as follows. Displays beta-galactosidase activity with the artificial chromogenic substrate o-nitrophenyl-beta-D-galactopyranoside (ONPG). This chain is Beta-galactosidase, found in Thermoanaerobacterium thermosulfurigenes (Clostridium thermosulfurogenes).